The sequence spans 731 residues: RNA-binding protein RMD9-like, mitochondrial (731 aa).

Over residues 1–10 (MIRLAQQTQV) the composition is skewed to polar residues. Disordered regions lie at residues 1-29 (MIRLAQQTQVLKGKPPNQFVPHPTKNSLT), 77-133 (GGNI…GNSI), and 590-630 (QNDR…FNNP). Positions 83–100 (NNNNHLAQNNSNNSNNHH) are enriched in low complexity. Positions 101-122 (NNNRNHHHNNNRNHHQNNHNHS) are enriched in basic residues. Position 132 is a phosphoserine (serine 132). Positions 598–617 (SNMNSTQISRTATPSPSLTP) are enriched in polar residues.

It belongs to the RMD9 family. Monomer. In terms of processing, phosphorylated. Phosphorylation promotes binding to RNA.

Its subcellular location is the mitochondrion inner membrane. Functionally, may be involved in the processing or stability of mitochondrial mRNAs. The chain is RNA-binding protein RMD9-like, mitochondrial from Saccharomyces cerevisiae (strain ATCC 204508 / S288c) (Baker's yeast).